The following is a 360-amino-acid chain: N5-carboxyaminoimidazole ribonucleotide synthase (360 aa).

Residues R98, K138, 143-149 (GYDGKGQ), 173-176 (EGFV), E181, H204, and 255-256 (NE) each bind ATP. The region spanning 102–285 (KSMFKDLGIP…QFENHLRAVA (184 aa)) is the ATP-grasp domain.

The protein belongs to the PurK/PurT family. In terms of assembly, homodimer.

The catalysed reaction is 5-amino-1-(5-phospho-beta-D-ribosyl)imidazole + hydrogencarbonate + ATP = 5-carboxyamino-1-(5-phospho-D-ribosyl)imidazole + ADP + phosphate + 2 H(+). Its pathway is purine metabolism; IMP biosynthesis via de novo pathway; 5-amino-1-(5-phospho-D-ribosyl)imidazole-4-carboxylate from 5-amino-1-(5-phospho-D-ribosyl)imidazole (N5-CAIR route): step 1/2. Its function is as follows. Catalyzes the ATP-dependent conversion of 5-aminoimidazole ribonucleotide (AIR) and HCO(3)(-) to N5-carboxyaminoimidazole ribonucleotide (N5-CAIR). The polypeptide is N5-carboxyaminoimidazole ribonucleotide synthase (Pseudomonas aeruginosa (strain ATCC 15692 / DSM 22644 / CIP 104116 / JCM 14847 / LMG 12228 / 1C / PRS 101 / PAO1)).